The primary structure comprises 54 residues: Photosystem II reaction center protein K (54 aa).

Residues 1–17 (MFQISLDMISNKINLLG) constitute a propeptide that is removed on maturation. The helical transmembrane segment at 29–49 (IVDVLPIIPILFFLLAFVWQA) threads the bilayer.

The protein belongs to the PsbK family. As to quaternary structure, PSII is composed of 1 copy each of membrane proteins PsbA, PsbB, PsbC, PsbD, PsbE, PsbF, PsbH, PsbI, PsbJ, PsbK, PsbL, PsbM, PsbT, PsbY, PsbZ, Psb30/Ycf12, at least 3 peripheral proteins of the oxygen-evolving complex and a large number of cofactors. It forms dimeric complexes.

It is found in the plastid. Its subcellular location is the chloroplast thylakoid membrane. One of the components of the core complex of photosystem II (PSII). PSII is a light-driven water:plastoquinone oxidoreductase that uses light energy to abstract electrons from H(2)O, generating O(2) and a proton gradient subsequently used for ATP formation. It consists of a core antenna complex that captures photons, and an electron transfer chain that converts photonic excitation into a charge separation. The chain is Photosystem II reaction center protein K from Euglena stellata.